The sequence spans 146 residues: Deoxyuridine 5'-triphosphate nucleotidohydrolase (146 aa).

Residues 60-62 (RSG), Asn-73, and 77-79 (VID) contribute to the substrate site.

This sequence belongs to the dUTPase family. Requires Mg(2+) as cofactor.

The enzyme catalyses dUTP + H2O = dUMP + diphosphate + H(+). It participates in pyrimidine metabolism; dUMP biosynthesis; dUMP from dCTP (dUTP route): step 2/2. This enzyme is involved in nucleotide metabolism: it produces dUMP, the immediate precursor of thymidine nucleotides and it decreases the intracellular concentration of dUTP so that uracil cannot be incorporated into DNA. The chain is Deoxyuridine 5'-triphosphate nucleotidohydrolase from Tropheryma whipplei (strain TW08/27) (Whipple's bacillus).